The sequence spans 383 residues: Arginine biosynthesis bifunctional protein ArgJ (383 aa).

Substrate is bound by residues Thr-146, Lys-168, Thr-179, Glu-259, Asn-378, and Ser-383. The active-site Nucleophile is Thr-179.

Belongs to the ArgJ family. In terms of assembly, heterotetramer of two alpha and two beta chains.

It is found in the cytoplasm. It carries out the reaction N(2)-acetyl-L-ornithine + L-glutamate = N-acetyl-L-glutamate + L-ornithine. The enzyme catalyses L-glutamate + acetyl-CoA = N-acetyl-L-glutamate + CoA + H(+). It functions in the pathway amino-acid biosynthesis; L-arginine biosynthesis; L-ornithine and N-acetyl-L-glutamate from L-glutamate and N(2)-acetyl-L-ornithine (cyclic): step 1/1. Its pathway is amino-acid biosynthesis; L-arginine biosynthesis; N(2)-acetyl-L-ornithine from L-glutamate: step 1/4. In terms of biological role, catalyzes two activities which are involved in the cyclic version of arginine biosynthesis: the synthesis of N-acetylglutamate from glutamate and acetyl-CoA as the acetyl donor, and of ornithine by transacetylation between N(2)-acetylornithine and glutamate. In Streptomyces coelicolor (strain ATCC BAA-471 / A3(2) / M145), this protein is Arginine biosynthesis bifunctional protein ArgJ.